The chain runs to 457 residues: Multidrug resistance protein MdtK (457 aa).

The Cytoplasmic segment spans residues 1-10 (MQKYISEARL). A helical transmembrane segment spans residues 11 to 31 (LLALAIPVILAQIAQTAMGFV). Residues 32-52 (DTVMAGGYSATDMAAVAIGTS) are Periplasmic-facing. The helical transmembrane segment at 53-73 (IWLPAILFGHGLLLALTPVIA) threads the bilayer. At 74-92 (QLNGSGRRERIAHQVRQGF) the chain is on the cytoplasmic side. Residues 93 to 113 (WLAGFVSVLIMLVLWNAGYII) form a helical membrane-spanning segment. Residues 114-126 (RSMENIDPALADK) are Periplasmic-facing. A helical membrane pass occupies residues 127–147 (AVGYLRALLWGAPGYLFFQVA). Residues 148–159 (RNQCEGLAKTKP) lie on the Cytoplasmic side of the membrane. The helical transmembrane segment at 160-180 (GMVMGFIGLLVNIPVNYIFIY) threads the bilayer. Topologically, residues 181 to 188 (GHFGMPEL) are periplasmic. Residues 189 to 209 (GGVGCGVATAAVYWVMFLAMV) form a helical membrane-spanning segment. The Cytoplasmic segment spans residues 210–242 (SYIKRARSMRDIRNEKGTAKPDPAVMKRLIQLG). Residues 243-263 (LPIALALFFEVTLFAVVALLV) traverse the membrane as a helical segment. At 264-275 (SPLGIVDVAGHQ) the chain is on the periplasmic side. The chain crosses the membrane as a helical span at residues 276-296 (IALNFSSLMFVLPMSLAAAVT). Over 297–313 (IRVGYRLGQGSTLDAQT) the chain is Cytoplasmic. A helical transmembrane segment spans residues 314–334 (AARTGLMVGVCMATLTAIFTV). At 335–349 (SLREQIALLYNDNPE) the chain is on the periplasmic side. Residues 350-370 (VVTLAAHLMLLAAVYQISDSI) traverse the membrane as a helical segment. The Cytoplasmic segment spans residues 371 to 386 (QVIGSGILRGYKDTRS). Residues 387 to 407 (IFYITFTAYWVLGLPSGYILA) traverse the membrane as a helical segment. Residues 408–417 (LTDLVVEPMG) are Periplasmic-facing. A helical membrane pass occupies residues 418–438 (PAGFWIGFIIGLTSAAIMMML). At 439–457 (RMRFLQRMPSAIILQRASR) the chain is on the cytoplasmic side.

Belongs to the multi antimicrobial extrusion (MATE) (TC 2.A.66.1) family. MdtK subfamily.

The protein localises to the cell inner membrane. Multidrug efflux pump that functions probably as a Na(+)/drug antiporter. This Shigella boydii serotype 4 (strain Sb227) protein is Multidrug resistance protein MdtK.